The sequence spans 159 residues: Cyclic pyranopterin monophosphate synthase (159 aa).

Substrate is bound by residues 75–77 and 113–114; these read LCH and ME. D128 is a catalytic residue.

This sequence belongs to the MoaC family. As to quaternary structure, homohexamer; trimer of dimers.

The catalysed reaction is (8S)-3',8-cyclo-7,8-dihydroguanosine 5'-triphosphate = cyclic pyranopterin phosphate + diphosphate. Its pathway is cofactor biosynthesis; molybdopterin biosynthesis. Catalyzes the conversion of (8S)-3',8-cyclo-7,8-dihydroguanosine 5'-triphosphate to cyclic pyranopterin monophosphate (cPMP). This is Cyclic pyranopterin monophosphate synthase from Thiobacillus denitrificans (strain ATCC 25259 / T1).